A 91-amino-acid chain; its full sequence is ATP-dependent Clp protease adapter protein ClpS (91 aa).

The protein belongs to the ClpS family. In terms of assembly, binds to the N-terminal domain of the chaperone ClpA.

Its function is as follows. Involved in the modulation of the specificity of the ClpAP-mediated ATP-dependent protein degradation. The chain is ATP-dependent Clp protease adapter protein ClpS from Helicobacter pylori (strain ATCC 700392 / 26695) (Campylobacter pylori).